The primary structure comprises 380 residues: Tryptophan 2,3-dioxygenase (380 aa).

Substrate-binding positions include 57 to 61 and Arg-128; that span reads FIITH. Position 313 (His-313) interacts with heme. Thr-328 contacts substrate.

This sequence belongs to the tryptophan 2,3-dioxygenase family. As to quaternary structure, homotetramer. Dimer of dimers. Requires heme as cofactor.

It carries out the reaction L-tryptophan + O2 = N-formyl-L-kynurenine. Its pathway is amino-acid degradation; L-tryptophan degradation via kynurenine pathway; L-kynurenine from L-tryptophan: step 1/2. It participates in pigment biosynthesis; ommochrome biosynthesis. Functionally, heme-dependent dioxygenase that catalyzes the oxidative cleavage of the L-tryptophan (L-Trp) pyrrole ring and converts L-tryptophan to N-formyl-L-kynurenine. Catalyzes the oxidative cleavage of the indole moiety. This chain is Tryptophan 2,3-dioxygenase, found in Drosophila mojavensis (Fruit fly).